Reading from the N-terminus, the 178-residue chain is Cytidylate kinase (178 aa).

7 to 15 lines the ATP pocket; it reads GLPGTGTTT.

This sequence belongs to the cytidylate kinase family. Type 2 subfamily.

It localises to the cytoplasm. It catalyses the reaction CMP + ATP = CDP + ADP. It carries out the reaction dCMP + ATP = dCDP + ADP. The chain is Cytidylate kinase from Methanococcus aeolicus (strain ATCC BAA-1280 / DSM 17508 / OCM 812 / Nankai-3).